The sequence spans 523 residues: AarF domain-containing protein kinase 1 (523 aa).

The region spanning 148–484 (EFEEKPLGAA…SLWSYIHISL (337 aa)) is the Protein kinase domain. ATP is bound by residues 154–162 (LGAASLAQV) and Lys176. Catalysis depends on Asp308, which acts as the Proton acceptor.

This sequence belongs to the protein kinase superfamily. ADCK protein kinase family.

The protein localises to the mitochondrion. In terms of biological role, appears to be essential for maintaining mitochondrial cristae formation and mitochondrial function by acting via YME1L1 in a kinase-independent manner to regulate essential mitochondrial structural proteins OPA1 and IMMT. The action of this enzyme is not yet clear. It is not known if it has protein kinase activity and what type of substrate it would phosphorylate (Ser, Thr or Tyr). This is AarF domain-containing protein kinase 1 (adck1) from Xenopus tropicalis (Western clawed frog).